We begin with the raw amino-acid sequence, 334 residues long: MSSRLHPDIERAYRVLETGEPVSLELASALGRLPESEVLDLVSLANKVKNLYAPGEGGGVHACSIMNAKSGVCGENCRFCAQSKHNSAEVDVYGLVDEAKVLDQARALHEQGVGHFGIVTSGYGYRKVTPEFERILGMIDLLHRELPDLKVCASLGMLGDEPAAELARHGIAHYNINIQVDPGRYGELIADTHSVDERIDTIRRLRAHGIAVCCGGIIGTGETMQERIGMIFALQKLDVTVIPLNVLVPIDGTPLEGAAPVSVPEIAKTFAICRLAHPSKIIKFAAGRETVMKDFQGLLMLAGANGFLTGGYLTTRGRDMEADRQLAGQIARFS.

In terms of domain architecture, Radical SAM core spans 55 to 285 (GEGGGVHACS…AHPSKIIKFA (231 aa)). [4Fe-4S] cluster contacts are provided by Cys73, Cys77, and Cys80. Residues Cys152, Cys213, and Lys283 each coordinate [2Fe-2S] cluster.

It belongs to the radical SAM superfamily. Biotin synthase family. Homodimer. The cofactor is [4Fe-4S] cluster. [2Fe-2S] cluster serves as cofactor.

The enzyme catalyses (4R,5S)-dethiobiotin + (sulfur carrier)-SH + 2 reduced [2Fe-2S]-[ferredoxin] + 2 S-adenosyl-L-methionine = (sulfur carrier)-H + biotin + 2 5'-deoxyadenosine + 2 L-methionine + 2 oxidized [2Fe-2S]-[ferredoxin]. The protein operates within cofactor biosynthesis; biotin biosynthesis; biotin from 7,8-diaminononanoate: step 2/2. Its function is as follows. Catalyzes the conversion of dethiobiotin (DTB) to biotin by the insertion of a sulfur atom into dethiobiotin via a radical-based mechanism. In Chlorobaculum parvum (strain DSM 263 / NCIMB 8327) (Chlorobium vibrioforme subsp. thiosulfatophilum), this protein is Biotin synthase.